Consider the following 446-residue polypeptide: Hepatocyte nuclear factor 4-beta (446 aa).

The segment at residues asparagine 47–asparagine 122 is a DNA-binding region (nuclear receptor). NR C4-type zinc fingers lie at residues cysteine 50–cysteine 70 and cysteine 86–cysteine 110. An NR LBD domain is found at asparagine 137–glycine 366.

The protein belongs to the nuclear hormone receptor family. NR2 subfamily. Homodimerization is required for HNF4-alpha to bind to its recognition site. As to expression, expressed in liver, kidney, stomach, intestine, lung, ovary, and testis. Not expressed in fat, muscle and brain.

The protein resides in the nucleus. Functionally, transcription factor; binds and activates the promoter for the HNF1-alpha gene. Seems to have a lower DNA binding activity than HNF4-alpha and is a weaker transactivator than the alpha isoform. The sequence is that of Hepatocyte nuclear factor 4-beta (hnf4b) from Xenopus laevis (African clawed frog).